A 551-amino-acid chain; its full sequence is Glucose-6-phosphate isomerase (551 aa).

Catalysis depends on glutamate 349, which acts as the Proton donor. Active-site residues include histidine 378 and lysine 480.

The protein belongs to the GPI family.

The protein localises to the cytoplasm. The catalysed reaction is alpha-D-glucose 6-phosphate = beta-D-fructose 6-phosphate. It functions in the pathway carbohydrate biosynthesis; gluconeogenesis. Its pathway is carbohydrate degradation; glycolysis; D-glyceraldehyde 3-phosphate and glycerone phosphate from D-glucose: step 2/4. In terms of biological role, catalyzes the reversible isomerization of glucose-6-phosphate to fructose-6-phosphate. This Prochlorococcus marinus (strain MIT 9313) protein is Glucose-6-phosphate isomerase.